A 320-amino-acid chain; its full sequence is Eukaryotic translation initiation factor 3 subunit G (320 aa).

Residues 1–25 form a disordered region; it reads MPTGDFDSKPSWADQVEEEGEDDKC. Residues serine 8 and serine 11 each carry the phosphoserine modification. 2 positions are modified to phosphothreonine: threonine 38 and threonine 41. Phosphoserine is present on residues serine 42, serine 189, serine 223, and serine 264. The disordered stretch occupies residues 209 to 234; that stretch reads KTGKYVPPSLRDGASRRGESMQPNRR. Residues 221–234 are compositionally biased toward basic and acidic residues; the sequence is GASRRGESMQPNRR. Residues 239–317 enclose the RRM domain; sequence ATIRVTNLSE…LILNVEWAKP (79 aa).

This sequence belongs to the eIF-3 subunit G family. In terms of assembly, component of the eukaryotic translation initiation factor 3 (eIF-3) complex, which is composed of 13 subunits: EIF3A, EIF3B, EIF3C, EIF3D, EIF3E, EIF3F, EIF3G, EIF3H, EIF3I, EIF3J, EIF3K, EIF3L and EIF3M. The eIF-3 complex appears to include 3 stable modules: module A is composed of EIF3A, EIF3B, EIF3G and EIF3I; module B is composed of EIF3F, EIF3H, and EIF3M; and module C is composed of EIF3C, EIF3D, EIF3E, EIF3K and EIF3L. EIF3C of module C binds EIF3B of module A and EIF3H of module B, thereby linking the three modules. EIF3J is a labile subunit that binds to the eIF-3 complex via EIF3B. The eIF-3 complex interacts with RPS6KB1 under conditions of nutrient depletion. Mitogenic stimulation leads to binding and activation of a complex composed of FRAP1 and RAPTOR, leading to phosphorylation and release of RPS6KB1 and binding of EIF4B to eIF-3. Interacts (via C-terminus) with AIFM1 (via N-terminus). Interacts with DHX33; the interaction is independent of RNA. In terms of processing, phosphorylated. Phosphorylation is enhanced upon serum stimulation.

The protein localises to the cytoplasm. Its subcellular location is the nucleus. The protein resides in the perinuclear region. RNA-binding component of the eukaryotic translation initiation factor 3 (eIF-3) complex, which is required for several steps in the initiation of protein synthesis. The eIF-3 complex associates with the 40S ribosome and facilitates the recruitment of eIF-1, eIF-1A, eIF-2:GTP:methionyl-tRNAi and eIF-5 to form the 43S pre-initiation complex (43S PIC). The eIF-3 complex stimulates mRNA recruitment to the 43S PIC and scanning of the mRNA for AUG recognition. The eIF-3 complex is also required for disassembly and recycling of post-termination ribosomal complexes and subsequently prevents premature joining of the 40S and 60S ribosomal subunits prior to initiation. The eIF-3 complex specifically targets and initiates translation of a subset of mRNAs involved in cell proliferation, including cell cycling, differentiation and apoptosis, and uses different modes of RNA stem-loop binding to exert either translational activation or repression. This subunit can bind 18S rRNA. The polypeptide is Eukaryotic translation initiation factor 3 subunit G (Bos taurus (Bovine)).